Here is a 605-residue protein sequence, read N- to C-terminus: Protein Spindly (605 aa).

M1 is subject to N-acetylmethionine. A coiled-coil region spans residues 2–442; the sequence is EADIITNLRC…ELKLKYEPEE (441 aa). S513, S515, and S555 each carry phosphoserine. The segment at 544–580 is disordered; the sequence is ALSERSGNTPNSPRLAAESKLQTEVKEGKETSSKLEK. Over residues 564–580 the composition is skewed to basic and acidic residues; the sequence is LQTEVKEGKETSSKLEK.

This sequence belongs to the Spindly family. Interacts with KNTC1 and ZW10. These interactions appear weak and may be transient or indirect. Interacts with dynein intermediate chain and dynactin (DCTN1). Interacts with the catalytically active form of USP45. Monoubiquitinated with'Lys-48' linkage. Deubiquitinated by USP45.

Its subcellular location is the cytoplasm. The protein localises to the cytoskeleton. The protein resides in the microtubule organizing center. It is found in the centrosome. It localises to the chromosome. Its subcellular location is the centromere. The protein localises to the kinetochore. The protein resides in the nucleus. It is found in the spindle pole. In terms of biological role, required for the localization of dynein and dynactin to the mitotic kintochore. Dynein is believed to control the initial lateral interaction between the kinetochore and spindle microtubules and to facilitate the subsequent formation of end-on kinetochore-microtubule attachments mediated by the NDC80 complex. Also required for correct spindle orientation. Does not appear to be required for the removal of spindle assembly checkpoint (SAC) proteins from the kinetochore upon bipolar spindle attachment. Acts as an adapter protein linking the dynein motor complex to various cargos and converts dynein from a non-processive to a highly processive motor in the presence of dynactin. Facilitates the interaction between dynein and dynactin and activates dynein processivity (the ability to move along a microtubule for a long distance without falling off the track). Plays a role in cell migration. In Homo sapiens (Human), this protein is Protein Spindly.